The following is a 296-amino-acid chain: Stanniocalcin-2 (296 aa).

Residues 1–24 form the signal peptide; it reads MCAERLGQFVTLALVFATLDPAQG. A disordered region spans residues 21–44; sequence PAQGTDSTNPPEGPQDRSSQQKGR. The segment covering 24–44 has biased composition (polar residues); that stretch reads GTDSTNPPEGPQDRSSQQKGR. N-linked (GlcNAc...) asparagine glycosylation occurs at Asn-73. Residues 218–296 are disordered; that stretch reads PPTAAPEHQP…EQSEYSDIRR (79 aa). Positions 240-258 are enriched in basic and acidic residues; that stretch reads RDTDHHLTANRGAKGERGS. Low complexity predominate over residues 272–282; it reads GQSAQGPSGSS.

Belongs to the stanniocalcin family. Homodimer; disulfide-linked. In terms of tissue distribution, found in a variety of tissues including skeletal muscle, small intestine, kidney, liver and brain.

The protein resides in the secreted. In terms of biological role, has an anti-hypocalcemic action on calcium and phosphate homeostasis. This Mus musculus (Mouse) protein is Stanniocalcin-2 (Stc2).